Reading from the N-terminus, the 345-residue chain is Phosphoribosylformylglycinamidine cyclo-ligase (345 aa).

It belongs to the AIR synthase family.

It localises to the cytoplasm. It catalyses the reaction 2-formamido-N(1)-(5-O-phospho-beta-D-ribosyl)acetamidine + ATP = 5-amino-1-(5-phospho-beta-D-ribosyl)imidazole + ADP + phosphate + H(+). Its pathway is purine metabolism; IMP biosynthesis via de novo pathway; 5-amino-1-(5-phospho-D-ribosyl)imidazole from N(2)-formyl-N(1)-(5-phospho-D-ribosyl)glycinamide: step 2/2. This Shewanella putrefaciens (strain CN-32 / ATCC BAA-453) protein is Phosphoribosylformylglycinamidine cyclo-ligase.